The following is a 228-amino-acid chain: PKHD-type hydroxylase XC_1340 (228 aa).

Residues arginine 78–serine 180 form the Fe2OG dioxygenase domain. 3 residues coordinate Fe cation: histidine 96, aspartate 98, and histidine 161. Arginine 171 lines the 2-oxoglutarate pocket.

Requires Fe(2+) as cofactor. L-ascorbate is required as a cofactor.

The polypeptide is PKHD-type hydroxylase XC_1340 (Xanthomonas campestris pv. campestris (strain 8004)).